A 151-amino-acid polypeptide reads, in one-letter code: MEVILKEDIETLGHRGDIVKVADGYGRNYLLPKKLAMEATAANKAVIEQMKASAVRRSAKEKAEAEQLVAQLDAVALVFERKVGDHDHLFGSVTSSDIAQQLEQQGFHIDRRKVQLEEPLKQTGEFLIPVKLHREVTAHVKVTVKGEETAA.

It belongs to the bacterial ribosomal protein bL9 family.

Binds to the 23S rRNA. The sequence is that of Large ribosomal subunit protein bL9 from Acidobacterium capsulatum (strain ATCC 51196 / DSM 11244 / BCRC 80197 / JCM 7670 / NBRC 15755 / NCIMB 13165 / 161).